A 262-amino-acid polypeptide reads, in one-letter code: MSQHQARKRFGQHFLTDESVIDAIVRAIAPARDDAIVEIGPGLSALTAPLIARLNRLSVVEIDRDLAARLRKKYPPEQLSVVEADALTVDFRQFGAGMRVVGNLPYNISSPLLFHLMGAADLVRDQHFMLQREVIDRMVAEPRSADYGRLSVMLQSRYRMEKLFDVPPEAFDPPPRVVSAVVRMVPLGPDRPQPASEAAFEAVVARAFSQRRKMLRRGLGDWAAHVPWDDIGVPPTARAEEVGVAQFIRLTDALLAAGVIKA.

The S-adenosyl-L-methionine site is built by His-13, Leu-15, Gly-40, Glu-61, Asp-85, and Asn-103.

It belongs to the class I-like SAM-binding methyltransferase superfamily. rRNA adenine N(6)-methyltransferase family. RsmA subfamily.

It localises to the cytoplasm. The enzyme catalyses adenosine(1518)/adenosine(1519) in 16S rRNA + 4 S-adenosyl-L-methionine = N(6)-dimethyladenosine(1518)/N(6)-dimethyladenosine(1519) in 16S rRNA + 4 S-adenosyl-L-homocysteine + 4 H(+). In terms of biological role, specifically dimethylates two adjacent adenosines (A1518 and A1519) in the loop of a conserved hairpin near the 3'-end of 16S rRNA in the 30S particle. May play a critical role in biogenesis of 30S subunits. This is Ribosomal RNA small subunit methyltransferase A from Bordetella avium (strain 197N).